The sequence spans 243 residues: Large ribosomal subunit protein uL3 (243 aa).

2 disordered regions span residues 139 to 164 (VSHR…KMPG) and 218 to 243 (KPGK…QEGV). An N5-methylglutamine modification is found at Gln151. The span at 231-243 (QTAAAPAAEQEGV) shows a compositional bias: low complexity.

This sequence belongs to the universal ribosomal protein uL3 family. As to quaternary structure, part of the 50S ribosomal subunit. Forms a cluster with proteins L14 and L19. Post-translationally, methylated by PrmB.

Its function is as follows. One of the primary rRNA binding proteins, it binds directly near the 3'-end of the 23S rRNA, where it nucleates assembly of the 50S subunit. In Rhodopseudomonas palustris (strain BisB18), this protein is Large ribosomal subunit protein uL3.